Here is a 587-residue protein sequence, read N- to C-terminus: Lamin-B1 (587 aa).

The span at 1–11 shows a compositional bias: polar residues; that stretch reads MATATPVQQRA. Residues 1-29 are disordered; the sequence is MATATPVQQRAGSRASAPATPFSPTRLSR. Alanine 2 carries the post-translational modification N-acetylalanine. The head stretch occupies residues 2 to 34; it reads ATATPVQQRAGSRASAPATPFSPTRLSRLQEKE. Residues threonine 3 and threonine 5 each carry the phosphothreonine modification. An Omega-N-methylarginine modification is found at arginine 14. Serine 16 carries the post-translational modification Phosphoserine. Threonine 20 is subject to Phosphothreonine. Serine 23 carries the phosphoserine modification. Threonine 25 is subject to Phosphothreonine. Serine 28 carries the post-translational modification Phosphoserine. The 357-residue stretch at 32–388 folds into the IF rod domain; that stretch reads EKEELRELND…KLLEGEEERL (357 aa). A coil 1A region spans residues 35-69; the sequence is ELRELNDRLAVYIDKVRSLETENSALQLQVTEREE. The segment at 70–81 is linker 1; the sequence is VRGRELTGLKAL. The interval 82 to 215 is coil 1B; the sequence is YETELADARR…EFRKNMYEEE (134 aa). A Glycyl lysine isopeptide (Lys-Gly) (interchain with G-Cter in SUMO2) cross-link involves residue lysine 102. Lysine 111 is subject to N6-acetyllysine. Lysine 123 is covalently cross-linked (Glycyl lysine isopeptide (Lys-Gly) (interchain with G-Cter in SUMO2)). The residue at position 126 (serine 126) is a Phosphoserine. A Glycyl lysine isopeptide (Lys-Gly) (interchain with G-Cter in SUMO2) cross-link involves residue lysine 145. The residue at position 157 (lysine 157) is an N6-acetyllysine; alternate. A Glycyl lysine isopeptide (Lys-Gly) (interchain with G-Cter in SUMO2); alternate cross-link involves residue lysine 157. At serine 158 the chain carries Phosphoserine. Residue lysine 181 forms a Glycyl lysine isopeptide (Lys-Gly) (interchain with G-Cter in SUMO2) linkage. Phosphoserine occurs at positions 200 and 232. Positions 216–243 are linker 2; it reads INETRRKHETRLVEVDSGRQIEYEYKLA. Residues lysine 241 and lysine 261 each participate in a glycyl lysine isopeptide (Lys-Gly) (interchain with G-Cter in SUMO2) cross-link. Positions 244 to 386 are coil 2; the sequence is QALHEMREQH…YRKLLEGEEE (143 aa). Position 271 is an N6-acetyllysine; alternate (lysine 271). A Glycyl lysine isopeptide (Lys-Gly) (interchain with G-Cter in SUMO2); alternate cross-link involves residue lysine 271. Residues serine 278 and serine 302 each carry the phosphoserine modification. Residue lysine 312 forms a Glycyl lysine isopeptide (Lys-Gly) (interchain with G-Cter in SUMO2) linkage. Lysine 330 is modified (N6-acetyllysine; alternate). Residue lysine 330 forms a Glycyl lysine isopeptide (Lys-Gly) (interchain with G-Cter in SUMO2); alternate linkage. A phosphoserine mark is found at serine 375 and serine 393. The tract at residues 387 to 587 is tail; sequence RLKLSPSPSS…RASNKSCAIM (201 aa). Residues 390–409 show a composition bias toward low complexity; the sequence is LSPSPSSRVTVSRASSSRSV. The disordered stretch occupies residues 390-432; the sequence is LSPSPSSRVTVSRASSSRSVRTTRGKRKRVDVEESEASSSVSI. O-linked (GlcNAc) threonine glycosylation is present at threonine 399. Residue arginine 413 is modified to Omega-N-methylarginine. Residues 415 to 420 carry the Nuclear localization signal motif; that stretch reads KRKRVD. Residues 430–546 form the LTD domain; it reads VSISHSASAT…EEVAQRSTVF (117 aa). Lysine 483 is modified (N6-acetyllysine). A Glycyl lysine isopeptide (Lys-Gly) (interchain with G-Cter in SUMO2) cross-link involves residue lysine 532. Position 534 is a phosphoserine (serine 534). A Glycyl lysine isopeptide (Lys-Gly) (interchain with G-Cter in SUMO2) cross-link involves residue lysine 547. The disordered stretch occupies residues 550–587; that stretch reads IPEEEEEEEEEPIGVPLEEERFHQQGTPRASNKSCAIM. Residues 551-561 show a composition bias toward acidic residues; it reads PEEEEEEEEEP. Polar residues predominate over residues 573–587; it reads QQGTPRASNKSCAIM. Threonine 576 carries the post-translational modification Phosphothreonine. Cysteine 584 bears the Cysteine methyl ester mark. A lipid anchor (S-farnesyl cysteine) is attached at cysteine 584. Residues 585–587 constitute a propeptide, removed in mature form; sequence AIM.

It belongs to the intermediate filament family. As to quaternary structure, homodimer. Lamin dimers then assemble into dimeric head-to-tail polymers. Ultimately, two head-to-tail polymers assemble laterally into a protofilament with a uniformly shaped rod of 3.5 nm in diameter. Interacts with SPAG4 and SEPT12. Post-translationally, B-type lamins undergo a series of modifications, such as farnesylation and phosphorylation. Increased phosphorylation of the lamins occurs before envelope disintegration and probably plays a role in regulating lamin associations. In terms of processing, phosphorylation plays a key role in lamin organization, subcellular localization and nuclear envelope disintegration. Phosphorylation by CDK1 at Ser-23 and Ser-393 at the onset of mitosis drives lamin disassembly and nuclear envelope breakdown.

Its subcellular location is the nucleus lamina. In terms of biological role, lamins are intermediate filament proteins that assemble into a filamentous meshwork, and which constitute the major components of the nuclear lamina, a fibrous layer on the nucleoplasmic side of the inner nuclear membrane. Lamins provide a framework for the nuclear envelope, bridging the nuclear envelope and chromatin, thereby playing an important role in nuclear assembly, chromatin organization, nuclear membrane and telomere dynamics. The structural integrity of the lamina is strictly controlled by the cell cycle, as seen by the disintegration and formation of the nuclear envelope in prophase and telophase, respectively. This chain is Lamin-B1 (Lmnb1), found in Rattus norvegicus (Rat).